The primary structure comprises 402 residues: Multidrug resistance protein MdtH (402 aa).

Topologically, residues 1–12 (MSRVSQARNLGK) are cytoplasmic. Residues 13–33 (YFLLIDNMLVVLGFFVVFPLI) traverse the membrane as a helical segment. At 34–98 (SIRFVDQMGW…GFATMGIAHE (65 aa)) the chain is on the periplasmic side. A helical membrane pass occupies residues 99 to 116 (PWLLWFSCFLSGLGGTLF). Residues 117 to 138 (DPPRSALVVKLIRPEQRGRFFS) lie on the Cytoplasmic side of the membrane. The chain crosses the membrane as a helical span at residues 139–159 (LLMMQDSAGAVIGALLGSWLL). Residues 160–164 (QYDFR) are Periplasmic-facing. Residues 165 to 185 (LVCATGAILFILCALFNAWLL) form a helical membrane-spanning segment. The Cytoplasmic portion of the chain corresponds to 186-213 (PAWKLSTVRTPVREGMRRVMSDKRFVTY). A helical transmembrane segment spans residues 214-234 (VLTLAGYYMLAVQVMLMLPIM). Over 235-243 (VNDIAGSPA) the chain is Periplasmic. Residues 244 to 264 (AVKWMYAIEACLSLTLLYPIA) traverse the membrane as a helical segment. The Cytoplasmic portion of the chain corresponds to 265 to 276 (RWSEKRFRLEHR). A helical membrane pass occupies residues 277–297 (LMAGLLVMSLSMIPIGMVGNL). The Periplasmic segment spans residues 298–299 (QQ). Residues 300-320 (LFTLICAFYIGSVIAEPARET) form a helical membrane-spanning segment. Topologically, residues 321–339 (LSASLADARARGSYMGFSR) are cytoplasmic. Residues 340 to 360 (LGLAIGGAIGYIGGGWLFDMG) form a helical membrane-spanning segment. Residues 361–367 (KALAQPE) are Periplasmic-facing. The chain crosses the membrane as a helical span at residues 368-388 (LPWMMLGIIGFITFLALGWQF). The Cytoplasmic portion of the chain corresponds to 389 to 402 (SHKRTPRRMLEPGA).

It belongs to the major facilitator superfamily. DHA1 family. MdtH (TC 2.A.1.2.21) subfamily.

Its subcellular location is the cell inner membrane. The chain is Multidrug resistance protein MdtH from Salmonella schwarzengrund (strain CVM19633).